The following is a 1000-amino-acid chain: Putative methyl-accepting chemotaxis protein sll0041 (1000 aa).

The tract at residues 1 to 59 (MTQNPSSDRRPDTAQSVANGETLDGALFTGLTDTAAAQDESSETSASFATIDGEDKSEV) is disordered. 2 GAF domains span residues 342 to 478 (EIQG…QTTL) and 509 to 650 (NSEQ…GLAL). An HAMP domain is found at 671 to 722 (EKMQKRALELLMEVDPVSRGDLTIRAHVTEDEIGTIADSYNATIESLRRIVT). The Methyl-accepting transducer domain occupies 727 to 963 (AASQFTETTD…SVTQTMALVA (237 aa)).

Belongs to the methyl-accepting chemotaxis (MCP) protein family.

The chain is Putative methyl-accepting chemotaxis protein sll0041 from Synechocystis sp. (strain ATCC 27184 / PCC 6803 / Kazusa).